The primary structure comprises 100 residues: Large ribosomal subunit protein uL23 (100 aa).

Belongs to the universal ribosomal protein uL23 family. As to quaternary structure, part of the 50S ribosomal subunit. Contacts protein L29, and trigger factor when it is bound to the ribosome.

Its function is as follows. One of the early assembly proteins it binds 23S rRNA. One of the proteins that surrounds the polypeptide exit tunnel on the outside of the ribosome. Forms the main docking site for trigger factor binding to the ribosome. The chain is Large ribosomal subunit protein uL23 from Vibrio campbellii (strain ATCC BAA-1116).